The chain runs to 41 residues: Large ribosomal subunit protein bL36 (41 aa).

It belongs to the bacterial ribosomal protein bL36 family.

The protein is Large ribosomal subunit protein bL36 of Xanthomonas axonopodis pv. citri (strain 306).